The chain runs to 332 residues: 4-hydroxyproline 2-epimerase 2 (332 aa).

Cys89 functions as the Proton acceptor in the catalytic mechanism. Residues His222, Asp248, and 253 to 254 (GT) contribute to the substrate site.

Belongs to the proline racemase family.

The enzyme catalyses trans-4-hydroxy-L-proline = cis-4-hydroxy-D-proline. Catalyzes the epimerization of trans-4-hydroxy-L-proline (t4LHyp) to cis-4-hydroxy-D-proline (c4DHyp). Is likely involved in a degradation pathway that converts t4LHyp to alpha-ketoglutarate. Displays no proline racemase activity. This is 4-hydroxyproline 2-epimerase 2 from Rhizobium rhizogenes (strain K84 / ATCC BAA-868) (Agrobacterium radiobacter).